We begin with the raw amino-acid sequence, 366 residues long: RNA 3'-terminal phosphate cyclase (366 aa).

ATP-binding residues include Gln104, Pro131, Tyr294, Asp297, Gln298, and His320. His320 serves as the catalytic Tele-AMP-histidine intermediate.

This sequence belongs to the RNA 3'-terminal cyclase family. Type 1 subfamily. In terms of tissue distribution, detected in retinal ganglion cells (RGCs) (at protein level).

The protein localises to the nucleus. It is found in the nucleoplasm. The catalysed reaction is a 3'-end 3'-phospho-ribonucleotide-RNA + ATP = a 3'-end 2',3'-cyclophospho-ribonucleotide-RNA + AMP + diphosphate. Its function is as follows. Catalyzes the conversion of 3'-phosphate to a 2',3'-cyclic phosphodiester at the end of RNA. The mechanism of action of the enzyme occurs in 3 steps: (A) adenylation of the enzyme by ATP; (B) transfer of adenylate to an RNA-N3'P to produce RNA-N3'PP5'A; (C) and attack of the adjacent 2'-hydroxyl on the 3'-phosphorus in the diester linkage to produce the cyclic end product. Likely functions in some aspects of cellular RNA processing. Function plays an important role in regulating axon regeneration by inhibiting central nervous system (CNS) axon regeneration following optic nerve injury. This chain is RNA 3'-terminal phosphate cyclase, found in Mus musculus (Mouse).